Reading from the N-terminus, the 185-residue chain is Elongation factor P (185 aa).

Belongs to the elongation factor P family.

It is found in the cytoplasm. It functions in the pathway protein biosynthesis; polypeptide chain elongation. Functionally, involved in peptide bond synthesis. Stimulates efficient translation and peptide-bond synthesis on native or reconstituted 70S ribosomes in vitro. Probably functions indirectly by altering the affinity of the ribosome for aminoacyl-tRNA, thus increasing their reactivity as acceptors for peptidyl transferase. The sequence is that of Elongation factor P from Acetivibrio thermocellus (strain ATCC 27405 / DSM 1237 / JCM 9322 / NBRC 103400 / NCIMB 10682 / NRRL B-4536 / VPI 7372) (Clostridium thermocellum).